We begin with the raw amino-acid sequence, 227 residues long: Cytochrome c oxidase subunit 2 (227 aa).

Residues 1–14 (MAYPFQLGLQDATS) are Mitochondrial intermembrane-facing. Residues 15–45 (PIMEELLHFHDHTLMIVFLISSLVLYIISLM) form a helical membrane-spanning segment. The Mitochondrial matrix segment spans residues 46 to 59 (LTTKLTHTSTMDAQ). Residues 60-87 (EVETVWTILPAIILILIALPSLRILYMM) form a helical membrane-spanning segment. Residues 88–227 (DEINNPSLTV…YFETWSALMV (140 aa)) lie on the Mitochondrial intermembrane side of the membrane. Residues His-161, Cys-196, Glu-198, Cys-200, His-204, and Met-207 each coordinate Cu cation. Residue Glu-198 participates in Mg(2+) binding. Position 218 is a phosphotyrosine (Tyr-218).

This sequence belongs to the cytochrome c oxidase subunit 2 family. In terms of assembly, component of the cytochrome c oxidase (complex IV, CIV), a multisubunit enzyme composed of 14 subunits. The complex is composed of a catalytic core of 3 subunits MT-CO1, MT-CO2 and MT-CO3, encoded in the mitochondrial DNA, and 11 supernumerary subunits COX4I, COX5A, COX5B, COX6A, COX6B, COX6C, COX7A, COX7B, COX7C, COX8 and NDUFA4, which are encoded in the nuclear genome. The complex exists as a monomer or a dimer and forms supercomplexes (SCs) in the inner mitochondrial membrane with NADH-ubiquinone oxidoreductase (complex I, CI) and ubiquinol-cytochrome c oxidoreductase (cytochrome b-c1 complex, complex III, CIII), resulting in different assemblies (supercomplex SCI(1)III(2)IV(1) and megacomplex MCI(2)III(2)IV(2)). Found in a complex with TMEM177, COA6, COX18, COX20, SCO1 and SCO2. Interacts with TMEM177 in a COX20-dependent manner. Interacts with COX20. Interacts with COX16. Requires Cu cation as cofactor.

The protein resides in the mitochondrion inner membrane. The enzyme catalyses 4 Fe(II)-[cytochrome c] + O2 + 8 H(+)(in) = 4 Fe(III)-[cytochrome c] + 2 H2O + 4 H(+)(out). In terms of biological role, component of the cytochrome c oxidase, the last enzyme in the mitochondrial electron transport chain which drives oxidative phosphorylation. The respiratory chain contains 3 multisubunit complexes succinate dehydrogenase (complex II, CII), ubiquinol-cytochrome c oxidoreductase (cytochrome b-c1 complex, complex III, CIII) and cytochrome c oxidase (complex IV, CIV), that cooperate to transfer electrons derived from NADH and succinate to molecular oxygen, creating an electrochemical gradient over the inner membrane that drives transmembrane transport and the ATP synthase. Cytochrome c oxidase is the component of the respiratory chain that catalyzes the reduction of oxygen to water. Electrons originating from reduced cytochrome c in the intermembrane space (IMS) are transferred via the dinuclear copper A center (CU(A)) of subunit 2 and heme A of subunit 1 to the active site in subunit 1, a binuclear center (BNC) formed by heme A3 and copper B (CU(B)). The BNC reduces molecular oxygen to 2 water molecules using 4 electrons from cytochrome c in the IMS and 4 protons from the mitochondrial matrix. The polypeptide is Cytochrome c oxidase subunit 2 (MT-CO2) (Canis adustus (Side-striped jackal)).